A 443-amino-acid polypeptide reads, in one-letter code: Chromosome partition protein MukF (443 aa).

Residues 209–237 (LDETSGNLRELQDTLNAAGDKLQAQLLRI) are leucine-zipper.

Belongs to the MukF family. In terms of assembly, interacts, and probably forms a ternary complex, with MukE and MukB via its C-terminal region. The complex formation is stimulated by calcium or magnesium. It is required for an interaction between MukE and MukB.

Its subcellular location is the cytoplasm. The protein resides in the nucleoid. Involved in chromosome condensation, segregation and cell cycle progression. May participate in facilitating chromosome segregation by condensation DNA from both sides of a centrally located replisome during cell division. Not required for mini-F plasmid partitioning. Probably acts via its interaction with MukB and MukE. Overexpression results in anucleate cells. It has a calcium binding activity. In Actinobacillus pleuropneumoniae serotype 7 (strain AP76), this protein is Chromosome partition protein MukF.